A 247-amino-acid chain; its full sequence is Protein McbF (247 aa).

One can recognise an ABC transporter domain in the interval 6–234 (LEINSLSFSY…NNETTQKRHL (229 aa)). 40 to 47 (GENPAGKT) contacts ATP.

The protein belongs to the ABC transporter superfamily.

Its function is as follows. Together with two further proteins McbE and McbG this protein causes immunity to the peptide antibiotic microcin B17, which inhibits DNA replication in enterobacteriaceae. Immunity is determined by two different mechanisms. McbE is involved in the production of extracellular MccB17 and, in a complex with mcbf it also serves as 'pump' for the export of active MccB17 from the cytoplasm to the periplasmic space. This is Protein McbF (mcbF) from Escherichia coli.